A 330-amino-acid chain; its full sequence is Alpha-1,6-glucosyltransferase (330 aa).

The protein belongs to the glycosyltransferase group 1 family. Requires Does not require a metal cofactor. as cofactor.

Its subcellular location is the cytoplasm. The protein operates within protein modification; protein glycosylation. In terms of biological role, catalyzes the transfer of a glucose moiety from UDP-glucose to another glucose that is N-linked to an asparagine within a peptide or protein. Can act in a repetitive manner, and this way it elongates the N-linked glucose by a glycan chain consisting of several alpha-1-&gt;6 linked glucose residues. Is able to add up to six glucose units in vitro. Cannot use UDP-Gal, UDP-GlcNAc or UDP-GalNAc as a substrate donor. The sequence is that of Alpha-1,6-glucosyltransferase from Actinobacillus pleuropneumoniae serotype 7 (strain AP76).